A 384-amino-acid polypeptide reads, in one-letter code: 8-amino-7-oxononanoate synthase (384 aa).

Arg-21 lines the substrate pocket. 108 to 109 (GF) provides a ligand contact to pyridoxal 5'-phosphate. His-133 is a binding site for substrate. Pyridoxal 5'-phosphate contacts are provided by Ser-179, His-207, and Thr-233. Residue Lys-236 is modified to N6-(pyridoxal phosphate)lysine. Thr-350 contributes to the substrate binding site.

This sequence belongs to the class-II pyridoxal-phosphate-dependent aminotransferase family. BioF subfamily. In terms of assembly, homodimer. The cofactor is pyridoxal 5'-phosphate.

It catalyses the reaction 6-carboxyhexanoyl-[ACP] + L-alanine + H(+) = (8S)-8-amino-7-oxononanoate + holo-[ACP] + CO2. It functions in the pathway cofactor biosynthesis; biotin biosynthesis. Catalyzes the decarboxylative condensation of pimeloyl-[acyl-carrier protein] and L-alanine to produce 8-amino-7-oxononanoate (AON), [acyl-carrier protein], and carbon dioxide. The protein is 8-amino-7-oxononanoate synthase of Erwinia tasmaniensis (strain DSM 17950 / CFBP 7177 / CIP 109463 / NCPPB 4357 / Et1/99).